We begin with the raw amino-acid sequence, 466 residues long: Putative chitinase 2 (466 aa).

An N-terminal signal peptide occupies residues 1-17 (MYLTIWLVPLLAVGTWG). The GH18 domain maps to 20 to 380 (FNRFCHYNSW…MAVIHGLNAY (361 aa)). Cysteine 24 and cysteine 49 are disulfide-bonded. Glutamate 141 (proton donor) is an active-site residue. Positions 395 to 447 (YNKKILRARVSLRNYRRRNQQGKVAEMEQRIRNLEQELQQSMGNMAYERQQAQ) form a coiled coil.

The protein belongs to the glycosyl hydrolase 18 family. Prismatic layer of shell (at protein level). Expressed primarily in the mantle with highest level in the mantle edge and lower level in the mantle pallium.

The protein localises to the secreted. It carries out the reaction Random endo-hydrolysis of N-acetyl-beta-D-glucosaminide (1-&gt;4)-beta-linkages in chitin and chitodextrins.. The protein is Putative chitinase 2 of Margaritifera margaritifera (Freshwater pearl mussel).